Consider the following 380-residue polypeptide: uncharacterized protein (380 aa).

A coiled-coil region spans residues 256 to 301; sequence DKEEKIQKSYQYQTELITELQGRIAELEKENQSLKENVKEPETSKP.

This is an uncharacterized protein from Pasteurella multocida (strain Pm70).